A 1365-amino-acid chain; its full sequence is MTSTPSKSRKSAKAAKAAKAEAAAFAKSRALSKTPPPFRNRVVDKKVLKELVAWAFKNHGTAATASMADQLKDLGFKYATQAAVSISVNDLKVPAAKKDLLDQAEELITETEESYRLGVITEVERHTKVIDTWTETNERLVDAVKKNFNDNDPLNSVWMMANSGARGNMSQVRQLVGMRGLMANPQGEIIDLPIRTNFREGLTVTEYVISSYGARKGLVDTALRTADSGYLTRRLVDVAQDVIVREDDCGTMRSIMVKAEDGRFGNRLVGRLTADQVLGADGEVIAERNSEIDPPLSKRFEAAGVSALMVRSPLTCEANRSVCRKCYGWALAHNQLVDLGEAVGIIAAQSIGEPGTQLTMRTFHTGGVSTAESGVVRSKFEGTVEFGSKAKVRPYRTPHGVNAQQSDVDFSLTIKPSGSGKPQKIEITNGSLLFVDDGQKIASDVTVATIAAGAVQKSVEKATKDVICDLAGQVSYDPTIQPREVTDRQGNITHKAQRLGRMWVLAGDVYNLPPNARPVVSSGGSVIESQVLAEASQASEYGGAIRLREALGDSREVQIVTTSMTLRDFKLLGESTHAGEIWNLEAKDGTRYRLNTIPGSKIGNAEVIAELADDRFRTQTGGLVKFAPGLAIKKARSAKNGYEVNKGGTLLWIPQETHEINKDISLLMITDGQWIEAGTEVVKDIFSQTAGIVSVTQKNDILREIIVRSGSFHLCTEKKALERFQGDGVMVNPGEAIAKGISSDAMVFVQAVETPEGTGLLLRPVEEYTIPNEAQLPDLGHVKQPNGPHLGIKATQRLAFKDNELVKSVEGVELLRTQLMLETFDTTPQMTVDVEAVPDKRAKTIERLQLVILESILVRRDTISDSSHGSTHTELQVEDGQSIKAGDVVATTQILCKQAGVAEMPEATEDEPVRRLIVERPEDTITINTSGAPVVTVGQRVVDGEELAQGQPSDCCGEVEQVSANSVTMRLGRPYMISPDSLLHVRDGDLVQRGDGLALLVFERQKTGDIVQGLPRIEELLEARRPRESSILCKKPGTVEIKQGEDDEFTTVTVIESDDAIAEYPILLGRNVMVSDGQQVNAGELLTDGPINPHELLECFFEDLRSRKPLMDAAQEAIAKLQHRLVTEVQNVYKSQGVSIHDKHIEVIVRQMTSKVRIEDAGDTTLLPGELIELRQVENTNQAMSITGGAPAEFTPVLLGITKASLNTDSFISAASFQETTRVLTEAAIEGKSDWLRGLKENVIIGRLIPAGTGFSGFEEELRAEAGPHPDILSEDPAGYRRMQNLRPDYTVDMPAAPAAKSTALLDDPSAADLEATRSRHGIEAEASNFAAFTRPDADNELAEEQVLDPAAVENLQEQGLLSDE.

The Zn(2+) site is built by Cys249, Cys316, Cys323, and Cys326.

It belongs to the RNA polymerase beta' chain family. RpoC2 subfamily. As to quaternary structure, in cyanobacteria the RNAP catalytic core is composed of 2 alpha, 1 beta, 1 beta', 1 gamma and 1 omega subunit. When a sigma factor is associated with the core the holoenzyme is formed, which can initiate transcription. The cofactor is Zn(2+).

It catalyses the reaction RNA(n) + a ribonucleoside 5'-triphosphate = RNA(n+1) + diphosphate. Its function is as follows. DNA-dependent RNA polymerase catalyzes the transcription of DNA into RNA using the four ribonucleoside triphosphates as substrates. The sequence is that of DNA-directed RNA polymerase subunit beta' from Synechococcus sp. (strain CC9311).